Here is a 1420-residue protein sequence, read N- to C-terminus: DNA-directed RNA polymerase subunit beta' (1420 aa).

Residues Cys-70, Cys-72, Cys-85, and Cys-88 each contribute to the Zn(2+) site. Mg(2+)-binding residues include Asp-464, Asp-466, and Asp-468. Cys-823, Cys-897, Cys-904, and Cys-907 together coordinate Zn(2+).

The protein belongs to the RNA polymerase beta' chain family. In terms of assembly, the RNAP catalytic core consists of 2 alpha, 1 beta, 1 beta' and 1 omega subunit. When a sigma factor is associated with the core the holoenzyme is formed, which can initiate transcription. The cofactor is Mg(2+). It depends on Zn(2+) as a cofactor.

The enzyme catalyses RNA(n) + a ribonucleoside 5'-triphosphate = RNA(n+1) + diphosphate. Functionally, DNA-dependent RNA polymerase catalyzes the transcription of DNA into RNA using the four ribonucleoside triphosphates as substrates. The chain is DNA-directed RNA polymerase subunit beta' from Polynucleobacter asymbioticus (strain DSM 18221 / CIP 109841 / QLW-P1DMWA-1) (Polynucleobacter necessarius subsp. asymbioticus).